We begin with the raw amino-acid sequence, 54 residues long: Preprotein translocase subunit SecG (54 aa).

The Cytoplasmic segment spans residues 1-31 (MSSGQNSGGLMSSAGLVRYFDAEDRNSIRID). Residues 32–53 (PKTIVAFGVLFGVGVLVLNALA) form a helical membrane-spanning segment. Residue isoleucine 54 is a topological domain, extracellular.

It belongs to the SEC61-beta family. In terms of assembly, component of the protein translocase complex. Heterotrimer consisting of alpha (SecY), beta (SecG) and gamma (SecE) subunits. Can form oligomers of the heterotrimer.

The protein localises to the cell membrane. Involved in protein export. The function of the beta subunit is unknown, but it may be involved in stabilization of the trimeric complex. The sequence is that of Preprotein translocase subunit SecG from Haloquadratum walsbyi (strain DSM 16790 / HBSQ001).